The primary structure comprises 366 residues: MRFVDEARIQVRAGKGGHGCLSFRREKFVPRGGPDGGNGGDGGSVYLRADNRLLSLYDFRLKRLYEAQNGRPGEGSQCDGRKGENLVLNLPVGTLVYAEGPEGEVLVADLSEPDAEVLVASGGRGGKGNEHFKSSTMRAPRFSQPGEPGEEFNLRLELKILADAGLIGLPNAGKSTFISQVSAARPKIAAYPFTTLTPNLGVMIDEVDPDRRMVIADIPGLIEGAHEGQGLGLRFLKHVERTRFLVHILSIEDVGDEDPWAGFSLVNEELRRFDAELGERRQIEVVNKIDLVSPERLEALKERARADGREVYFISARDDLGLEPLVQELWQVCESTARNEPIVRLEGLTDVEEEEFPEIEVIYTRE.

Residues 1–161 (MRFVDEARIQ…FNLRLELKIL (161 aa)) form the Obg domain. The interval 121 to 148 (SGGRGGKGNEHFKSSTMRAPRFSQPGEP) is disordered. Residues 162-334 (ADAGLIGLPN…LVQELWQVCE (173 aa)) enclose the OBG-type G domain. Residues 168 to 175 (GLPNAGKS), 193 to 197 (FTTLT), 217 to 220 (DIPG), 287 to 290 (NKID), and 315 to 317 (SAR) each bind GTP. Ser-175 and Thr-195 together coordinate Mg(2+).

The protein belongs to the TRAFAC class OBG-HflX-like GTPase superfamily. OBG GTPase family. Monomer. Mg(2+) is required as a cofactor.

The protein localises to the cytoplasm. Functionally, an essential GTPase which binds GTP, GDP and possibly (p)ppGpp with moderate affinity, with high nucleotide exchange rates and a fairly low GTP hydrolysis rate. Plays a role in control of the cell cycle, stress response, ribosome biogenesis and in those bacteria that undergo differentiation, in morphogenesis control. This Desulfovibrio desulfuricans (strain ATCC 27774 / DSM 6949 / MB) protein is GTPase Obg.